The sequence spans 687 residues: Glycine--tRNA ligase beta subunit (687 aa).

It belongs to the class-II aminoacyl-tRNA synthetase family. As to quaternary structure, tetramer of two alpha and two beta subunits.

It is found in the cytoplasm. It catalyses the reaction tRNA(Gly) + glycine + ATP = glycyl-tRNA(Gly) + AMP + diphosphate. The chain is Glycine--tRNA ligase beta subunit from Ruegeria sp. (strain TM1040) (Silicibacter sp.).